A 549-amino-acid chain; its full sequence is MTPDELSVALTACLKAAVEAGELVVPTEAVPAEVRVERPKNRDHGDWATNIALQLAKPAGLNPRAVAEILKSRLEAIEGVAAVDIAGPGFLNITLDAAAAGALAKNIVHAGSQYGENQALTGQVINVEFVSANPTGPLHLAHTRWAAVGDSVARLLKASGATVTSEYYINDAGSQMNNFGASVLAAIKGEPTPEGGYPGAYITELAQQVVRDHPYVTELTDEAALPVVRAAAYLAQLADIKETLNDFGVHFDVFFSEQELHSTGAVEKAVDRLRGQGHVFYQDGAIWLRTTDFTDDKDRVLIRANGEPTYFAADAAYYLSKKDRGFVEKIYLLGADHHGYIGRLKAIAACAGDDPARNIEVLIGQMVSVNGARLSKRAGNIVELRDLLNWLGADALRYSLGRSPADSPLALEPEQLQKASNDNPVFYVQYAHARTKAVDRNAEAAGVDRSAFEASLLTHPTESNLLAQLGAFPSVVAEAAKFREPHRVARHLEVVAGTYHRWYDACRVTPFAGEEITDLNRTRLWLNDATGQVLANGLDLLGVSAPERM.

Residues 132 to 142 (ANPTGPLHLAH) carry the 'HIGH' region motif.

It belongs to the class-I aminoacyl-tRNA synthetase family. In terms of assembly, monomer.

The protein localises to the cytoplasm. It carries out the reaction tRNA(Arg) + L-arginine + ATP = L-arginyl-tRNA(Arg) + AMP + diphosphate. The polypeptide is Arginine--tRNA ligase (Renibacterium salmoninarum (strain ATCC 33209 / DSM 20767 / JCM 11484 / NBRC 15589 / NCIMB 2235)).